Here is a 326-residue protein sequence, read N- to C-terminus: Tagatose 1,6-diphosphate aldolase (326 aa).

The protein belongs to the aldolase LacD family.

It catalyses the reaction D-tagatofuranose 1,6-bisphosphate = D-glyceraldehyde 3-phosphate + dihydroxyacetone phosphate. It participates in carbohydrate metabolism; D-tagatose 6-phosphate degradation; D-glyceraldehyde 3-phosphate and glycerone phosphate from D-tagatose 6-phosphate: step 2/2. The polypeptide is Tagatose 1,6-diphosphate aldolase (Staphylococcus aureus (strain Mu3 / ATCC 700698)).